The chain runs to 233 residues: uncharacterized protein (233 aa).

Residues Asn58, Asn77, Asn93, Asn102, Asn110, Asn120, and Asn155 are each glycosylated (N-linked (GlcNAc...) asparagine; by host). The span at 102–124 (NSSTTTTTNASSSDSSMYNTTRS) shows a compositional bias: low complexity. Residues 102–132 (NSSTTTTTNASSSDSSMYNTTRSTQRRVTYD) form a disordered region. A helical membrane pass occupies residues 168-188 (FSLLQWVLVAALAFFMYYFLW).

Belongs to the ascovirus HvAv ORF58 family.

The protein resides in the membrane. This is an uncharacterized protein from Trichoplusia ni ascovirus 2c (TnAV-2c).